A 368-amino-acid chain; its full sequence is Chorismate synthase (368 aa).

NADP(+) contacts are provided by R48 and R54. Residues 125–127 (RSS), 238–239 (NA), G278, 293–297 (KPTSS), and R319 each bind FMN.

It belongs to the chorismate synthase family. In terms of assembly, homotetramer. FMNH2 serves as cofactor.

The catalysed reaction is 5-O-(1-carboxyvinyl)-3-phosphoshikimate = chorismate + phosphate. Its pathway is metabolic intermediate biosynthesis; chorismate biosynthesis; chorismate from D-erythrose 4-phosphate and phosphoenolpyruvate: step 7/7. Its function is as follows. Catalyzes the anti-1,4-elimination of the C-3 phosphate and the C-6 proR hydrogen from 5-enolpyruvylshikimate-3-phosphate (EPSP) to yield chorismate, which is the branch point compound that serves as the starting substrate for the three terminal pathways of aromatic amino acid biosynthesis. This reaction introduces a second double bond into the aromatic ring system. In Methylibium petroleiphilum (strain ATCC BAA-1232 / LMG 22953 / PM1), this protein is Chorismate synthase.